Here is a 358-residue protein sequence, read N- to C-terminus: DNA replication and repair protein RecF (358 aa).

Glycine 30–threonine 37 provides a ligand contact to ATP.

Belongs to the RecF family.

It is found in the cytoplasm. Functionally, the RecF protein is involved in DNA metabolism; it is required for DNA replication and normal SOS inducibility. RecF binds preferentially to single-stranded, linear DNA. It also seems to bind ATP. This Edwardsiella ictaluri (strain 93-146) protein is DNA replication and repair protein RecF.